The following is a 328-amino-acid chain: DNA-directed RNA polymerase subunit alpha (328 aa).

Positions 1–231 (MIYQMQMPAK…EHVTFFADFS (231 aa)) are alpha N-terminal domain (alpha-NTD). Residues 252–328 (MRKLFNTKIE…MDITKYQMKG (77 aa)) form an alpha C-terminal domain (alpha-CTD) region.

The protein belongs to the RNA polymerase alpha chain family. Homodimer. The RNAP catalytic core consists of 2 alpha, 1 beta, 1 beta' and 1 omega subunit. When a sigma factor is associated with the core the holoenzyme is formed, which can initiate transcription.

It catalyses the reaction RNA(n) + a ribonucleoside 5'-triphosphate = RNA(n+1) + diphosphate. DNA-dependent RNA polymerase catalyzes the transcription of DNA into RNA using the four ribonucleoside triphosphates as substrates. This is DNA-directed RNA polymerase subunit alpha from Chlorobium limicola (strain DSM 245 / NBRC 103803 / 6330).